Consider the following 184-residue polypeptide: ATP synthase subunit b, chloroplastic (184 aa).

A helical transmembrane segment spans residues 27 to 49; sequence LATNLINLSVVLGVLIFFGKGVL.

This sequence belongs to the ATPase B chain family. As to quaternary structure, F-type ATPases have 2 components, F(1) - the catalytic core - and F(0) - the membrane proton channel. F(1) has five subunits: alpha(3), beta(3), gamma(1), delta(1), epsilon(1). F(0) has four main subunits: a(1), b(1), b'(1) and c(10-14). The alpha and beta chains form an alternating ring which encloses part of the gamma chain. F(1) is attached to F(0) by a central stalk formed by the gamma and epsilon chains, while a peripheral stalk is formed by the delta, b and b' chains.

The protein resides in the plastid. It localises to the chloroplast thylakoid membrane. F(1)F(0) ATP synthase produces ATP from ADP in the presence of a proton or sodium gradient. F-type ATPases consist of two structural domains, F(1) containing the extramembraneous catalytic core and F(0) containing the membrane proton channel, linked together by a central stalk and a peripheral stalk. During catalysis, ATP synthesis in the catalytic domain of F(1) is coupled via a rotary mechanism of the central stalk subunits to proton translocation. In terms of biological role, component of the F(0) channel, it forms part of the peripheral stalk, linking F(1) to F(0). The protein is ATP synthase subunit b, chloroplastic of Liriodendron tulipifera (Tuliptree).